The sequence spans 137 residues: MMIDNISNFDKVRAVVVAILLYIFIILVVDGSISSLIGKYITYPSDEYHIIEFYDFIHIIGFLLSLSISTYFSSKDIIKDFAKFFTIFFGITFILGITLFLGLTFFENHIPSMRGYTTLMLFFFLLNLFKKLDKITN.

A run of 4 helical transmembrane segments spans residues 14–34, 48–68, 84–104, and 109–129; these read AVVV…GSIS, YHII…SLSI, FFTI…LGLT, and HIPS…LNLF.

It is found in the cell membrane. This is an uncharacterized protein from Methanocaldococcus jannaschii (strain ATCC 43067 / DSM 2661 / JAL-1 / JCM 10045 / NBRC 100440) (Methanococcus jannaschii).